We begin with the raw amino-acid sequence, 388 residues long: F-box/LRR-repeat protein At3g59190 (388 aa).

The region spanning K11–P64 is the F-box domain. LRR repeat units follow at residues K151–A177, F180–K205, C228–D252, T313–T345, and D346–V371.

This chain is F-box/LRR-repeat protein At3g59190, found in Arabidopsis thaliana (Mouse-ear cress).